A 163-amino-acid chain; its full sequence is Nucleotide-binding protein GWCH70_0711 (163 aa).

It belongs to the YajQ family.

In terms of biological role, nucleotide-binding protein. This chain is Nucleotide-binding protein GWCH70_0711, found in Geobacillus sp. (strain WCH70).